We begin with the raw amino-acid sequence, 486 residues long: Glutamate--tRNA ligase (486 aa).

The short motif at 11–21 (PSPTGFLHIGG) is the 'HIGH' region element. Positions 108, 110, 136, and 138 each coordinate Zn(2+). Positions 253–257 (KLSKR) match the 'KMSKS' region motif. Lysine 256 is a binding site for ATP.

This sequence belongs to the class-I aminoacyl-tRNA synthetase family. Glutamate--tRNA ligase type 1 subfamily. Monomer. Zn(2+) serves as cofactor.

Its subcellular location is the cytoplasm. It catalyses the reaction tRNA(Glu) + L-glutamate + ATP = L-glutamyl-tRNA(Glu) + AMP + diphosphate. Catalyzes the attachment of glutamate to tRNA(Glu) in a two-step reaction: glutamate is first activated by ATP to form Glu-AMP and then transferred to the acceptor end of tRNA(Glu). This is Glutamate--tRNA ligase from Lysinibacillus sphaericus (strain C3-41).